Here is a 264-residue protein sequence, read N- to C-terminus: uncharacterized protein (264 aa).

The chain crosses the membrane as a helical span at residues 7-27 (LTLGICLVLLIILIVGYVIMT).

The protein belongs to the staphylococcal tandem lipoprotein family.

It localises to the cell membrane. This is an uncharacterized protein from Staphylococcus aureus (strain NCTC 8325 / PS 47).